A 227-amino-acid polypeptide reads, in one-letter code: UPF0173 metal-dependent hydrolase BALH_4194 (227 aa).

This sequence belongs to the UPF0173 family.

The chain is UPF0173 metal-dependent hydrolase BALH_4194 from Bacillus thuringiensis (strain Al Hakam).